A 292-amino-acid chain; its full sequence is Keratin-associated protein 10-9 (292 aa).

25 tandem repeats follow at residues 26–30, 31–35, 36–40, 57–61, 79–83, 99–103, 104–108, 109–113, 114–118, 120–124, 130–134, 140–144, 145–149, 150–154, 162–166, 172–176, 182–186, 187–191, 192–196, 197–201, 209–213, 219–223, 224–228, 243–247, and 250–254. A 25 X 5 AA repeats of C-C-X(3) region spans residues 26–254; sequence CCEPPCCATS…VPVSSCCAPT (229 aa).

It belongs to the KRTAP type 10 family. As to quaternary structure, interacts with hair keratins. In terms of tissue distribution, restricted to a narrow region of the hair fiber cuticle, lying approximately 20 cell layers above the apex of the dermal papilla of the hair root; not detected in any other tissues.

In terms of biological role, in the hair cortex, hair keratin intermediate filaments are embedded in an interfilamentous matrix, consisting of hair keratin-associated proteins (KRTAP), which are essential for the formation of a rigid and resistant hair shaft through their extensive disulfide bond cross-linking with abundant cysteine residues of hair keratins. The matrix proteins include the high-sulfur and high-glycine-tyrosine keratins. The protein is Keratin-associated protein 10-9 (KRTAP10-9) of Homo sapiens (Human).